The chain runs to 548 residues: Rhodopsin kinase grk7-b (548 aa).

S33 carries the post-translational modification Phosphoserine; by PKA. The 120-residue stretch at 53-172 (FEDICEQQPI…QTSLFFDRFV (120 aa)) folds into the RGS domain. Residues 187–446 (FYEFRTLGKG…NDDPRKHEFF (260 aa)) enclose the Protein kinase domain. ATP contacts are provided by residues 193 to 201 (LGKGGFGEV) and K216. D312 acts as the Proton acceptor in catalysis. An AGC-kinase C-terminal domain is found at 447–512 (KSINFPRLEA…GVVPIAWQQE (66 aa)). The tract at residues 520 to 548 (DELSDPNRKESAAGLEDEEQQKSKSCTLL) is disordered. C545 is modified (cysteine methyl ester). C545 is lipidated: S-geranylgeranyl cysteine. Positions 546–548 (TLL) are cleaved as a propeptide — removed in mature form.

This sequence belongs to the protein kinase superfamily. AGC Ser/Thr protein kinase family. GPRK subfamily. Phosphorylation at Ser-33 is regulated by light and activated by cAMP. As to expression, expressed in the eyes (at protein level). Expressed in the eyes, the pineal gland and in the brain.

It is found in the membrane. It carries out the reaction L-threonyl-[rhodopsin] + ATP = O-phospho-L-threonyl-[rhodopsin] + ADP + H(+). It catalyses the reaction L-seryl-[rhodopsin] + ATP = O-phospho-L-seryl-[rhodopsin] + ADP + H(+). Retina-specific kinase involved in the shutoff of the photoresponse and adaptation to changing light conditions via cone opsin phosphorylation, including rhodopsin (RHO). This is Rhodopsin kinase grk7-b (grk7b) from Danio rerio (Zebrafish).